The sequence spans 300 residues: 4-hydroxy-tetrahydrodipicolinate synthase (300 aa).

Threonine 57 contacts pyruvate. Residue tyrosine 145 is the Proton donor/acceptor of the active site. Residue lysine 173 is the Schiff-base intermediate with substrate of the active site. Isoleucine 213 is a pyruvate binding site.

It belongs to the DapA family. Homotetramer; dimer of dimers.

It localises to the cytoplasm. The catalysed reaction is L-aspartate 4-semialdehyde + pyruvate = (2S,4S)-4-hydroxy-2,3,4,5-tetrahydrodipicolinate + H2O + H(+). It participates in amino-acid biosynthesis; L-lysine biosynthesis via DAP pathway; (S)-tetrahydrodipicolinate from L-aspartate: step 3/4. Its function is as follows. Catalyzes the condensation of (S)-aspartate-beta-semialdehyde [(S)-ASA] and pyruvate to 4-hydroxy-tetrahydrodipicolinate (HTPA). This Corynebacterium jeikeium (strain K411) protein is 4-hydroxy-tetrahydrodipicolinate synthase.